A 189-amino-acid chain; its full sequence is Glycerol-3-phosphate acyltransferase (189 aa).

5 helical membrane-spanning segments follow: residues 1–21 (MFWLLALLAYLLGSLSFAIVL), 50–70 (KLAILTLLGDLCKGLLPVLLA), 77–97 (LHAQAWVGVCAVLGHLFPLYF), 111–131 (MLMGLYFPAALLAIGAWLLTF), and 151–171 (LLAWREPEALLPITVLTAMIV).

This sequence belongs to the PlsY family. In terms of assembly, probably interacts with PlsX.

The protein localises to the cell inner membrane. It catalyses the reaction an acyl phosphate + sn-glycerol 3-phosphate = a 1-acyl-sn-glycero-3-phosphate + phosphate. It participates in lipid metabolism; phospholipid metabolism. In terms of biological role, catalyzes the transfer of an acyl group from acyl-phosphate (acyl-PO(4)) to glycerol-3-phosphate (G3P) to form lysophosphatidic acid (LPA). This enzyme utilizes acyl-phosphate as fatty acyl donor, but not acyl-CoA or acyl-ACP. The protein is Glycerol-3-phosphate acyltransferase of Pseudomonas putida (strain GB-1).